Reading from the N-terminus, the 338-residue chain is Glyceraldehyde-3-phosphate dehydrogenase (338 aa).

NAD(+) contacts are provided by residues 11-12 and Gly-109; that span reads TI. D-glyceraldehyde 3-phosphate is bound at residue 138–140; it reads SCN. Catalysis depends on Cys-139, which acts as the Nucleophile. Arg-167 is a binding site for NAD(+). D-glyceraldehyde 3-phosphate contacts are provided by residues Thr-169 and 192 to 193; that span reads HA. Gln-299 lines the NAD(+) pocket.

Belongs to the glyceraldehyde-3-phosphate dehydrogenase family. Homotetramer.

It is found in the cytoplasm. It carries out the reaction D-glyceraldehyde 3-phosphate + phosphate + NADP(+) = (2R)-3-phospho-glyceroyl phosphate + NADPH + H(+). The enzyme catalyses D-glyceraldehyde 3-phosphate + phosphate + NAD(+) = (2R)-3-phospho-glyceroyl phosphate + NADH + H(+). It participates in carbohydrate degradation; glycolysis; pyruvate from D-glyceraldehyde 3-phosphate: step 1/5. The protein is Glyceraldehyde-3-phosphate dehydrogenase of Thermoplasma volcanium (strain ATCC 51530 / DSM 4299 / JCM 9571 / NBRC 15438 / GSS1).